The sequence spans 101 residues: NAD(P)H-quinone oxidoreductase subunit 4L, chloroplastic (101 aa).

Transmembrane regions (helical) follow at residues 2-22, 32-52, and 61-81; these read ILEHVLVLSAYLFSIGIYGLI, MCLELILNAVNINFVTFSDFF, and IFSIFVIAIAAAEAAIGLAIV.

The protein belongs to the complex I subunit 4L family. As to quaternary structure, NDH is composed of at least 16 different subunits, 5 of which are encoded in the nucleus.

It localises to the plastid. Its subcellular location is the chloroplast thylakoid membrane. The enzyme catalyses a plastoquinone + NADH + (n+1) H(+)(in) = a plastoquinol + NAD(+) + n H(+)(out). The catalysed reaction is a plastoquinone + NADPH + (n+1) H(+)(in) = a plastoquinol + NADP(+) + n H(+)(out). In terms of biological role, NDH shuttles electrons from NAD(P)H:plastoquinone, via FMN and iron-sulfur (Fe-S) centers, to quinones in the photosynthetic chain and possibly in a chloroplast respiratory chain. The immediate electron acceptor for the enzyme in this species is believed to be plastoquinone. Couples the redox reaction to proton translocation, and thus conserves the redox energy in a proton gradient. The protein is NAD(P)H-quinone oxidoreductase subunit 4L, chloroplastic of Nicotiana sylvestris (Wood tobacco).